Here is a 309-residue protein sequence, read N- to C-terminus: Ribosomal RNA small subunit methyltransferase H (309 aa).

Residues 33–35, D53, F79, D100, and Q107 each bind S-adenosyl-L-methionine; that span reads GGH.

Belongs to the methyltransferase superfamily. RsmH family.

The protein localises to the cytoplasm. The enzyme catalyses cytidine(1402) in 16S rRNA + S-adenosyl-L-methionine = N(4)-methylcytidine(1402) in 16S rRNA + S-adenosyl-L-homocysteine + H(+). Specifically methylates the N4 position of cytidine in position 1402 (C1402) of 16S rRNA. The chain is Ribosomal RNA small subunit methyltransferase H from Clostridium botulinum (strain Langeland / NCTC 10281 / Type F).